Reading from the N-terminus, the 175-residue chain is Adenine phosphoribosyltransferase (175 aa).

This sequence belongs to the purine/pyrimidine phosphoribosyltransferase family. As to quaternary structure, homodimer.

It is found in the cytoplasm. It catalyses the reaction AMP + diphosphate = 5-phospho-alpha-D-ribose 1-diphosphate + adenine. It participates in purine metabolism; AMP biosynthesis via salvage pathway; AMP from adenine: step 1/1. Functionally, catalyzes a salvage reaction resulting in the formation of AMP, that is energically less costly than de novo synthesis. The polypeptide is Adenine phosphoribosyltransferase (Synechococcus sp. (strain JA-2-3B'a(2-13)) (Cyanobacteria bacterium Yellowstone B-Prime)).